Consider the following 389-residue polypeptide: Oxysterol-binding protein 1 (389 aa).

2 coiled-coil regions span residues 1-31 (MGKKDKNVSVEEEVDEAEIEKLAAENANKPA) and 340-371 (KDDVKGMSQEKVKVEEEQRKLAHHRKNADEWK). Residues 1-43 (MGKKDKNVSVEEEVDEAEIEKLAAENANKPAPQLTKEDLDAMD) are disordered.

Belongs to the OSBP family. In terms of assembly, interacts with dstC.

It localises to the cytoplasm. Functionally, may play a role in the regulation of the slug-fruiting body switch. This Dictyostelium discoideum (Social amoeba) protein is Oxysterol-binding protein 1 (osbA).